A 133-amino-acid polypeptide reads, in one-letter code: uncharacterized protein (133 aa).

The region spanning 9–128 (RILVYSDNVQ…VLGRTVLSLL (120 aa)) is the Response regulatory domain. Residue D64 is modified to 4-aspartylphosphate.

This is an uncharacterized protein from Mycobacterium tuberculosis (strain CDC 1551 / Oshkosh).